The sequence spans 99 residues: Beta-defensin 127 (99 aa).

A signal peptide spans 1-20 (MGLFMIIAILLFQKPTVTEQ). Cystine bridges form between cysteine 24–cysteine 53, cysteine 33–cysteine 47, and cysteine 37–cysteine 54. Positions 66 to 99 (ITKPPRPKPATLALTLQDYVTIIENFPSLKTQST) are excised as a propeptide.

Belongs to the beta-defensin family.

It is found in the secreted. Functionally, has antibacterial activity. This Homo sapiens (Human) protein is Beta-defensin 127 (DEFB127).